A 290-amino-acid polypeptide reads, in one-letter code: NAD kinase (290 aa).

Residue aspartate 75 is the Proton acceptor of the active site. NAD(+) contacts are provided by residues 75–76 (DG), 148–149 (NE), aspartate 178, 189–194 (TAYNIS), and glutamine 247.

Belongs to the NAD kinase family. A divalent metal cation is required as a cofactor.

It localises to the cytoplasm. It carries out the reaction NAD(+) + ATP = ADP + NADP(+) + H(+). Functionally, involved in the regulation of the intracellular balance of NAD and NADP, and is a key enzyme in the biosynthesis of NADP. Catalyzes specifically the phosphorylation on 2'-hydroxyl of the adenosine moiety of NAD to yield NADP. The sequence is that of NAD kinase from Wolinella succinogenes (strain ATCC 29543 / DSM 1740 / CCUG 13145 / JCM 31913 / LMG 7466 / NCTC 11488 / FDC 602W) (Vibrio succinogenes).